The primary structure comprises 652 residues: 2',3'-cyclic-nucleotide 2'-phosphodiesterase/3'-nucleotidase (652 aa).

Residues 1–24 form the signal peptide; that stretch reads MFKRPLTLSLLASLIALTTSTAQA. A divalent metal cation is bound by residues aspartate 36, histidine 38, aspartate 81, asparagine 121, histidine 230, histidine 262, and histidine 264. Substrate-binding positions include tyrosine 445 and 549–555; that span reads YRAYSGK.

Belongs to the 5'-nucleotidase family. It depends on a divalent metal cation as a cofactor.

It is found in the periplasm. It catalyses the reaction a nucleoside 2',3'-cyclic phosphate + H2O = a nucleoside 3'-phosphate + H(+). It carries out the reaction a ribonucleoside 3'-phosphate + H2O = a ribonucleoside + phosphate. This bifunctional enzyme catalyzes two consecutive reactions during ribonucleic acid degradation. Converts a 2',3'-cyclic nucleotide to a 3'-nucleotide and then the 3'-nucleotide to the corresponding nucleoside and phosphate. This Yersinia enterocolitica protein is 2',3'-cyclic-nucleotide 2'-phosphodiesterase/3'-nucleotidase (cpdB).